Here is a 286-residue protein sequence, read N- to C-terminus: MTDPESTAIDSVAAMATDHTEAPAHPLHKVLSFVRRSGRLDDRLQRAWDNYAGTYLLDIAAGNLLDVREGVTLDRALVESAWGNDNPLIVEIGTGQGENVVAAAAAHPETNFLALEVYDPGVAHTLLLAGKQGLTNIRVAQVNAPELFKVTAPGTAAEVWTFFPDPWPKKKHHKRRIVQEAMAGDIHRALAADGVWRIATDIEDYALHVHEVMDGLDGWKNLGSVTVSLPLEHVGKGNADLAADMPHADFTESERFEGRVLTNFEKKGLAAGRVIHDFTYQAVALH.

Glutamate 91, glutamate 116, asparagine 143, and aspartate 165 together coordinate S-adenosyl-L-methionine. Aspartate 165 is an active-site residue. Substrate-binding positions include lysine 169, aspartate 201, and 262-265 (TNFE).

The protein belongs to the class I-like SAM-binding methyltransferase superfamily. TrmB family.

It catalyses the reaction guanosine(46) in tRNA + S-adenosyl-L-methionine = N(7)-methylguanosine(46) in tRNA + S-adenosyl-L-homocysteine. It functions in the pathway tRNA modification; N(7)-methylguanine-tRNA biosynthesis. Functionally, catalyzes the formation of N(7)-methylguanine at position 46 (m7G46) in tRNA. This is tRNA (guanine-N(7)-)-methyltransferase from Bifidobacterium longum subsp. infantis (strain ATCC 15697 / DSM 20088 / JCM 1222 / NCTC 11817 / S12).